The primary structure comprises 180 residues: Stathmin-3 (180 aa).

S-palmitoyl cysteine attachment occurs at residues Cys22 and Cys24. The SLD domain maps to 38–180 (GDMEVKQLDK…NKEQREEMSG (143 aa)). A phosphoserine mark is found at Ser50, Ser60, Ser65, Ser68, Ser72, Ser73, and Ser81. The interval 58–82 (LKSPSDLSPESPMLSSPPKRKDTSL) is disordered. The segment covering 60–74 (SPSDLSPESPMLSSP) has biased composition (low complexity). The stretch at 76-179 (KRKDTSLEEL…RNKEQREEMS (104 aa)) forms a coiled coil.

This sequence belongs to the stathmin family. In terms of assembly, interacts with STAT3. Interacts with CLU (secreted form); this interaction may act as an important modulator during neuronal differentiation. N-terminal palmitoylation promotes specific anchoring to the cytosolic leaflet of Golgi membranes and subsequent vesicular trafficking along dendrites and axons. Neuronal Stathmins are substrates for palmitoyltransferases ZDHHC3, ZDHHC7 and ZDHHC15.

It localises to the golgi apparatus. It is found in the cell projection. Its subcellular location is the growth cone. The protein resides in the axon. The protein localises to the cytoplasm. It localises to the cytosol. Its function is as follows. Exhibits microtubule-destabilizing activity, which is antagonized by STAT3. In Bos taurus (Bovine), this protein is Stathmin-3 (STMN3).